The primary structure comprises 444 residues: UDP-N-acetylmuramoylalanine--D-glutamate ligase (444 aa).

An ATP-binding site is contributed by 113 to 119; the sequence is GSNGKST.

The protein belongs to the MurCDEF family.

Its subcellular location is the cytoplasm. It catalyses the reaction UDP-N-acetyl-alpha-D-muramoyl-L-alanine + D-glutamate + ATP = UDP-N-acetyl-alpha-D-muramoyl-L-alanyl-D-glutamate + ADP + phosphate + H(+). The protein operates within cell wall biogenesis; peptidoglycan biosynthesis. Functionally, cell wall formation. Catalyzes the addition of glutamate to the nucleotide precursor UDP-N-acetylmuramoyl-L-alanine (UMA). The polypeptide is UDP-N-acetylmuramoylalanine--D-glutamate ligase (Blochmanniella floridana).